The sequence spans 531 residues: Anthranilate synthase component 1 (531 aa).

Residues serine 56 and 284–286 (PYM) each bind L-tryptophan. Chorismate is bound at residue 324–325 (GS). Glutamate 351 serves as a coordination point for Mg(2+). Chorismate is bound by residues tyrosine 439, arginine 459, 473-475 (GGG), and glycine 475. Glutamate 488 is a Mg(2+) binding site. A disordered region spans residues 506 to 531 (LHNITPDSVSAPDSVSSPDSVTEANS). A compositionally biased stretch (low complexity) spans 511 to 531 (PDSVSAPDSVSSPDSVTEANS).

It belongs to the anthranilate synthase component I family. Heterotetramer consisting of two non-identical subunits: a beta subunit (TrpG) and a large alpha subunit (TrpE). Requires Mg(2+) as cofactor.

It catalyses the reaction chorismate + L-glutamine = anthranilate + pyruvate + L-glutamate + H(+). It participates in amino-acid biosynthesis; L-tryptophan biosynthesis; L-tryptophan from chorismate: step 1/5. Feedback inhibited by tryptophan. In terms of biological role, part of a heterotetrameric complex that catalyzes the two-step biosynthesis of anthranilate, an intermediate in the biosynthesis of L-tryptophan. In the first step, the glutamine-binding beta subunit (TrpG) of anthranilate synthase (AS) provides the glutamine amidotransferase activity which generates ammonia as a substrate that, along with chorismate, is used in the second step, catalyzed by the large alpha subunit of AS (TrpE) to produce anthranilate. In the absence of TrpG, TrpE can synthesize anthranilate directly from chorismate and high concentrations of ammonia. In Arthrobacter globiformis, this protein is Anthranilate synthase component 1 (trpE).